The chain runs to 106 residues: Protamine (106 aa).

The tract at residues 1-106 (ARAVRRRRAR…TRRRRRRARR (106 aa)) is disordered.

In terms of tissue distribution, sperm.

Its subcellular location is the nucleus. The protein resides in the chromosome. The protein is Protamine of Phorcus turbinatus (Sea snail).